The primary structure comprises 426 residues: Tachykinins (426 aa).

The propeptide occupies 1–116; it reads MQCDFRVHQD…IEDNLSHEFE (116 aa). Arg-127 is modified (arginine amide). Residues 131–145 constitute a propeptide that is removed on maturation; the sequence is GYLTPDFEDSYFRDE. Arg-156 is subject to Arginine amide. Residues 160–167 constitute a propeptide that is removed on maturation; that stretch reads VVSDDDYY. Arg-178 is subject to Arginine amide. The propeptide occupies 182–235; the sequence is SLEEVLGEIEKKAAMDYYDTRDKKTYVFEYPEDYEKRLLASIRGKLKEFPMEWE. Arg-246 carries the arginine amide modification. Residues 250–259 constitute a propeptide that is removed on maturation; the sequence is SLLDEIEELE. Arg-270 is modified (arginine amide). A propeptide spanning residues 274–291 is cleaved from the precursor; sequence NALENYIDYYLDPDMDFD. Residues 299–329 form a disordered region; it reads QGMRGKKDSDKRAPMGFQGMRGKRNTGQRFD. Arg-302 carries the post-translational modification Arginine amide. Positions 306 to 308 are excised as a propeptide; that stretch reads DSD. Arg-319 carries the arginine amide modification. Positions 323–358 are excised as a propeptide; it reads NTGQRFDTGINFNIRSSNEYQGTNNRRNALASCQLE. Arg-369 and Arg-386 each carry arginine amide. The propeptide occupies 390–426; that stretch reads WATAPYEDDSPFISVFDNTERIGVDGDSPAILGNSIS.

It belongs to the tachykinin family. Tachykinins (TK) are expressed throughout the nervous system. APMGFQGMR-amide is also expressed in the retrocerebral complex (at protein level).

It is found in the secreted. In terms of biological role, tachykinins are active peptides which excite neurons, evoke behavioral responses, are potent vasodilators and secretagogues, and contract (directly or indirectly) many smooth muscles. This Camponotus floridanus (Florida carpenter ant) protein is Tachykinins.